We begin with the raw amino-acid sequence, 311 residues long: JNK1/MAPK8-associated membrane protein (311 aa).

Residues 1-57 are Lumenal-facing; sequence MAVDIQPACLGLYCGKTLLFKNGSTEIYGECGVCPRGQRTNAQKYCQPCTESPELYD. An N-linked (GlcNAc...) asparagine glycan is attached at Asn22. The helical transmembrane segment at 58-78 threads the bilayer; the sequence is WLYLGFMAMLPLVLHWFFIEW. The Cytoplasmic segment spans residues 79 to 87; sequence YSGKKSSSA. The helical transmembrane segment at 88–108 threads the bilayer; the sequence is LFQHITALFECSMAAIITLLV. The Lumenal segment spans residues 109–149; sequence SDPVGVLYIRSCRVLMLSDWYTMLYNPSPDYVTTVHCTHEA. Residues 150-170 form a helical membrane-spanning segment; sequence VYPLYTIVFIYYAFCLVLMML. The Cytoplasmic portion of the chain corresponds to 171–188; it reads LRPLLVKKIACGLGKSDR. Residues 189–209 form a helical membrane-spanning segment; sequence FKSIYAALYFFPILTVLQAVG. Residue Gly210 is a topological domain, lumenal. Residues 211-231 traverse the membrane as a helical segment; sequence GLLYYAFPYIILVLSLVTLAV. Residues 232–250 are Cytoplasmic-facing; the sequence is YMSASEIENCYDLLVRKKR. A helical transmembrane segment spans residues 251-271; sequence LIVLFSHWLLHAYGIISISRV. At 272-277 the chain is on the lumenal side; sequence DKLEQD. Residues 278 to 298 form a helical membrane-spanning segment; the sequence is LPLLALVPTPALFYLFTAKFT. The Cytoplasmic portion of the chain corresponds to 299 to 311; the sequence is EPSRILSEGANGH.

As to quaternary structure, interacts with RNF5 and MAPK8, but not with MAPK9. Binding to MAPK8 occurs before and after exposure to stress, such as UV irradiation. After exposure to stress, interacts with phosphorylated MAPK8. Competes with DUSP10 for MAPK8 binding. Associates with multiple components of the proteasome and with ERAD regulatory proteins including AMFR/GP78, CANX, PSMC1, PSMC2, PSMC3/TBP1, PSMC5, PSMC6, PSMD8, SEC61-ALPHA and UFD1. Interacts with DERL1 (in the presence of misfolded protein CFTR(F508del)). In terms of processing, ubiquitinated by RNF5 via 'Lys-63'-linked ubiquitin linkage in a UBE2N-dependent manner. Ubiquitination decreases association with components of the proteasome and ERAD.

The protein resides in the endoplasmic reticulum membrane. In terms of biological role, regulates the duration of MAPK8 activity in response to various stress stimuli. Facilitates degradation of misfolded endoplasmic reticulum (ER) proteins through the recruitment of components of the proteasome and endoplasmic reticulum-associated degradation (ERAD) system. The polypeptide is JNK1/MAPK8-associated membrane protein (JKAMP) (Homo sapiens (Human)).